The following is a 341-amino-acid chain: 4-hydroxythreonine-4-phosphate dehydrogenase (341 aa).

T126 lines the substrate pocket. Residues H161, H206, and H272 each contribute to the a divalent metal cation site. Residues K280, N289, and R298 each coordinate substrate.

The protein belongs to the PdxA family. As to quaternary structure, homodimer. A divalent metal cation serves as cofactor.

The protein resides in the cytoplasm. It catalyses the reaction 4-(phosphooxy)-L-threonine + NAD(+) = 3-amino-2-oxopropyl phosphate + CO2 + NADH. Its pathway is cofactor biosynthesis; pyridoxine 5'-phosphate biosynthesis; pyridoxine 5'-phosphate from D-erythrose 4-phosphate: step 4/5. Functionally, catalyzes the NAD(P)-dependent oxidation of 4-(phosphooxy)-L-threonine (HTP) into 2-amino-3-oxo-4-(phosphooxy)butyric acid which spontaneously decarboxylates to form 3-amino-2-oxopropyl phosphate (AHAP). The chain is 4-hydroxythreonine-4-phosphate dehydrogenase from Thermosynechococcus vestitus (strain NIES-2133 / IAM M-273 / BP-1).